The following is a 242-amino-acid chain: DNA-directed RNA polymerase III subunit rpc5 (242 aa).

2 disordered regions span residues 1–22 (MSFSEDQAMEEAKLRNDETEEQ) and 153–172 (LKAAAGPSNSSSGTSTPRGP). Low complexity predominate over residues 155 to 172 (AAAGPSNSSSGTSTPRGP).

In terms of assembly, component of the RNA polymerase III (Pol III) complex consisting of 17 subunits.

Its subcellular location is the cytoplasm. It localises to the nucleus. DNA-dependent RNA polymerase catalyzes the transcription of DNA into RNA using the four ribonucleoside triphosphates as substrates. Specific peripheric component of RNA polymerase III which synthesizes small RNAs, such as 5S rRNA and tRNAs. The RPC53/RPC4-RPC37/RPC5 subcomplex is required for terminator recognition and reinitiation. This chain is DNA-directed RNA polymerase III subunit rpc5 (rpc37), found in Schizosaccharomyces pombe (strain 972 / ATCC 24843) (Fission yeast).